We begin with the raw amino-acid sequence, 275 residues long: 2,3,4,5-tetrahydropyridine-2,6-dicarboxylate N-succinyltransferase (275 aa).

Belongs to the transferase hexapeptide repeat family.

The protein localises to the cytoplasm. It carries out the reaction (S)-2,3,4,5-tetrahydrodipicolinate + succinyl-CoA + H2O = (S)-2-succinylamino-6-oxoheptanedioate + CoA. The protein operates within amino-acid biosynthesis; L-lysine biosynthesis via DAP pathway; LL-2,6-diaminopimelate from (S)-tetrahydrodipicolinate (succinylase route): step 1/3. The polypeptide is 2,3,4,5-tetrahydropyridine-2,6-dicarboxylate N-succinyltransferase (Burkholderia multivorans (strain ATCC 17616 / 249)).